The following is a 220-amino-acid chain: Fructose-6-phosphate aldolase (220 aa).

K85 (schiff-base intermediate with substrate) is an active-site residue.

The protein belongs to the transaldolase family. Type 3A subfamily. In terms of assembly, homodecamer.

Its subcellular location is the cytoplasm. It catalyses the reaction beta-D-fructose 6-phosphate = dihydroxyacetone + D-glyceraldehyde 3-phosphate. In terms of biological role, catalyzes the reversible formation of fructose 6-phosphate from dihydroxyacetone and D-glyceraldehyde 3-phosphate via an aldolization reaction. In Salmonella schwarzengrund (strain CVM19633), this protein is Fructose-6-phosphate aldolase.